A 466-amino-acid polypeptide reads, in one-letter code: Polycomb group protein FIE1 (466 aa).

A compositionally biased stretch (basic residues) spans 1–10 (MGPTSRNHKS). The segment at 1-71 (MGPTSRNHKS…GEGEPQETVL (71 aa)) is disordered. Low complexity predominate over residues 31–49 (SITASASASAFASPAVANS). WD repeat units lie at residues 167–209 (DMNE…IYKS), 212–252 (GHGG…LILV), 258–298 (GHRH…EYVE), 324–361 (IHSN…ENPG), 374–414 (PECN…PVLI), and 421–460 (QVKS…TAPV).

The protein belongs to the WD repeat ESC family. In terms of assembly, interacts with EZ1 and CLF. Component of the polycomb repressive complex 2 (PRC2), which methylates 'Lys-27' residues of histone H3 (H3K27me3), leading to transcriptional repression of the affected target gene. As to expression, expressed specifically in seed endosperm.

Polycomb group (PcG) protein. PcG proteins act by forming multiprotein complexes, which are required to maintain the transcriptionally repressive state of homeotic genes throughout development. PcG proteins are not required to initiate repression, but to maintain it during later stages of development. They act via the methylation of histones, rendering chromatin heritably changed in its expressibility. Together with EZ1 and CLF forms a complex that is involved in gene transcriptional repression by trimethylation on histone H3 'Lys-27' (H3K27me3) of target genes. Involved in the regulation of embryo and seed endosperm development. FIE1-containing PcG complex in seed endosperm regulates the expression of various transcription factors by trimethylation on histone H3 'Lys-27' (H3K27me3) of target genes. Involved in the overall expression regulation of nutrient metabolism genes, such as prolamin synthesis and seed storage protein synthesis genes. Can regulate valine, leucine and isoleucine metabolism-related genes. The protein is Polycomb group protein FIE1 of Oryza sativa subsp. japonica (Rice).